The following is a 335-amino-acid chain: Probable nicotianamine synthase 3 (335 aa).

It belongs to the nicotianamine synthase (NAS)-like family.

The enzyme catalyses 3 S-adenosyl-L-methionine = nicotianamine + 3 S-methyl-5'-thioadenosine + 3 H(+). In terms of biological role, synthesizes nicotianamine, a polyamine that is the first intermediate in the synthesis of the phytosiderophores of the mugineic acid type found in gramineae which serves as a sensor for the physiological iron status within the plant, and/or might be involved in the transport of iron. This Hordeum vulgare (Barley) protein is Probable nicotianamine synthase 3 (NAS3).